Consider the following 269-residue polypeptide: Tryptophan synthase alpha chain (269 aa).

Catalysis depends on proton acceptor residues Glu49 and Asp60.

The protein belongs to the TrpA family. In terms of assembly, tetramer of two alpha and two beta chains.

It carries out the reaction (1S,2R)-1-C-(indol-3-yl)glycerol 3-phosphate + L-serine = D-glyceraldehyde 3-phosphate + L-tryptophan + H2O. It participates in amino-acid biosynthesis; L-tryptophan biosynthesis; L-tryptophan from chorismate: step 5/5. Functionally, the alpha subunit is responsible for the aldol cleavage of indoleglycerol phosphate to indole and glyceraldehyde 3-phosphate. The chain is Tryptophan synthase alpha chain from Pseudomonas putida (Arthrobacter siderocapsulatus).